We begin with the raw amino-acid sequence, 191 residues long: dCTP deaminase (191 aa).

DCTP is bound by residues 112 to 117 (KSTYAR), 136 to 138 (TLE), Gln157, Tyr173, and Gln183. Residue Glu138 is the Proton donor/acceptor of the active site.

It belongs to the dCTP deaminase family. In terms of assembly, homotrimer.

It catalyses the reaction dCTP + H2O + H(+) = dUTP + NH4(+). It functions in the pathway pyrimidine metabolism; dUMP biosynthesis; dUMP from dCTP (dUTP route): step 1/2. Its function is as follows. Catalyzes the deamination of dCTP to dUTP. The chain is dCTP deaminase from Xylella fastidiosa (strain M12).